The sequence spans 376 residues: Chaperone protein DnaJ (376 aa).

Residues 5 to 69 form the J domain; it reads DYYEILGVDR…EKRARYDRFG (65 aa). Residues 135-217 form a CR-type zinc finger; the sequence is GLETDIRVPH…CNGKGVVRKT (83 aa). Positions 148, 151, 165, 168, 191, 194, 205, and 208 each coordinate Zn(2+). 4 CXXCXGXG motif repeats span residues 148–155, 165–172, 191–198, and 205–212; these read CPVCHGSR, CQTCGGSG, CPDCQGEG, and CSNCNGKG.

Belongs to the DnaJ family. Homodimer. Zn(2+) serves as cofactor.

The protein resides in the cytoplasm. Functionally, participates actively in the response to hyperosmotic and heat shock by preventing the aggregation of stress-denatured proteins and by disaggregating proteins, also in an autonomous, DnaK-independent fashion. Unfolded proteins bind initially to DnaJ; upon interaction with the DnaJ-bound protein, DnaK hydrolyzes its bound ATP, resulting in the formation of a stable complex. GrpE releases ADP from DnaK; ATP binding to DnaK triggers the release of the substrate protein, thus completing the reaction cycle. Several rounds of ATP-dependent interactions between DnaJ, DnaK and GrpE are required for fully efficient folding. Also involved, together with DnaK and GrpE, in the DNA replication of plasmids through activation of initiation proteins. The protein is Chaperone protein DnaJ of Methanothermobacter thermautotrophicus (strain ATCC 29096 / DSM 1053 / JCM 10044 / NBRC 100330 / Delta H) (Methanobacterium thermoautotrophicum).